A 261-amino-acid polypeptide reads, in one-letter code: Aquaporin-8 (261 aa).

The Cytoplasmic segment spans residues 1-36 (MSGEQTPMCSMDLPEVKVKTSMAGRCRVFWYEQYVQ). The chain crosses the membrane as a helical span at residues 37–57 (PCIVELVGSALFIFIGCLSVI). The residue at position 53 (Cys53) is a Cysteine persulfide. A Cysteine sulfenic acid (-SOH) modification is found at Cys53. The Extracellular portion of the chain corresponds to 58–84 (ENSPNTGLLQPALAHGLALGLIIATLG). The chain crosses the membrane as a helical span at residues 85–105 (NISGGHFNPAVSLAVTVIGGL). Residues 92–94 (NPA) carry the NPA 1 motif. Residues 106-107 (KT) are Cytoplasmic-facing. A helical membrane pass occupies residues 108 to 128 (MLLIPYWISQLFGGLIGAALA). The Extracellular segment spans residues 129–156 (KVVSPEERFWNASGAAFAIVQEQEQVAE). Asn139 carries N-linked (GlcNAc...) asparagine glycosylation. A helical transmembrane segment spans residues 157–177 (ALGIEIILTMLLVLAVCMGAV). At 178-183 (NEKTMG) the chain is on the cytoplasmic side. A helical membrane pass occupies residues 184 to 204 (PLAPFSIGFSVIVDILAGGSI). Topologically, residues 205-228 (SGACMNPARAFGPAVMAGYWDFHW) are extracellular. The short motif at 210–212 (NPA) is the NPA 2 element. Residues 229-249 (IYWLGPLLAGLFVGLLIRLLI) form a helical membrane-spanning segment. At 250–261 (GDEKTRLILKSR) the chain is on the cytoplasmic side.

It belongs to the MIP/aquaporin (TC 1.A.8) family. Sulfenylation at Cys-53(C53-SOH) when hydrogen peroxide flows through the AQP8 channel, making it susceptible to hydrogen sulfide produced by CBS. Post-translationally, persulfidation at Cys-53 is required to gate AQP8 channel; under stress condition, hydrogen peroxide accumulates in the cell leading to CBS activation that produces hydrogen sulfide inducing persulfidation of oxidized Cys-53 (C53-SOH). In terms of processing, N-glycosylated. In terms of tissue distribution, expressed in placenta. Highly expressed in the epithelial layer of gall-bladders. Expressed in heart, kidney, submandibular gland, liver, small intestine, colon, testes, and epididymis. In testes, expressed in spermatogenic cells.

The protein resides in the cell membrane. Its subcellular location is the mitochondrion inner membrane. It is found in the apical cell membrane. It localises to the basolateral cell membrane. The protein localises to the smooth endoplasmic reticulum membrane. The catalysed reaction is H2O(in) = H2O(out). It carries out the reaction urea(in) = urea(out). The enzyme catalyses NH4(+)(in) = NH4(+)(out). It catalyses the reaction H2O2(out) = H2O2(in). The catalysed reaction is formamide(out) = formamide(in). It carries out the reaction methylamine(out) = methylamine(in). With respect to regulation, reversibly gated by a two-step sulfenylation-persulfidation process in cells undergoing diverse stresses. In terms of biological role, channel that allows the facilitated permeation of water and uncharged molecules, such as hydrogen peroxide and the neutral form of ammonia (NH3), through cellular membranes such as plasma membrane, inner mitochondrial membrane and endoplasmic reticulum membrane of several tissues. The transport of ammonia neutral form induces a parallel transport of proton, at alkaline pH when the concentration of ammonia is high. However, it is unclear whether the transport of proton takes place via the aquaporin or via an endogenous pathway. Also, may transport ammonia analogs such as formamide and methylamine, a transport favourited at basic pH due to the increase of unprotonated (neutral) form, which is expected to favor diffusion. In vitro, may be also permeable to urea but not to glycerol. Does not transport urea or glycerol. The water transport mechanism is mercury- and copper-sensitive and passive in response to osmotic driving forces. At the canicular plasma membrane, mediates the osmotic transport of water toward the bile canaliculus and facilitates the cAMP-induced bile canalicular water secretion, a process involved in bile formation. In addition, mediates the hydrogen peroxide release from hepatocyte mitochondria that modulates the SREBF2-mediated cholesterol synthesis and facilitates the mitochondrial ammonia uptake which is metabolized into urea, mainly under glucagon stimulation. In B cells, transports the CYBB-generated hydrogen peroxide from the external leaflet of the plasma membrane to the cytosol to promote B cell activation and differentiation for signal amplification. In the small intestine and colon system, mediates water transport through mitochondria and apical membrane of epithelial cells. May play an important role in the adaptive response of proximal tubule cells to acidosis possibly facilitating mitochondrial ammonia transport. The sequence is that of Aquaporin-8 from Mus musculus (Mouse).